We begin with the raw amino-acid sequence, 118 residues long: NADH-ubiquinone oxidoreductase chain 3 (118 aa).

Helical transmembrane passes span Ile7–Leu27, Leu62–Val82, and Ile87–Leu107.

The protein belongs to the complex I subunit 3 family.

Its subcellular location is the mitochondrion membrane. It carries out the reaction a ubiquinone + NADH + 5 H(+)(in) = a ubiquinol + NAD(+) + 4 H(+)(out). Core subunit of the mitochondrial membrane respiratory chain NADH dehydrogenase (Complex I) that is believed to belong to the minimal assembly required for catalysis. Complex I functions in the transfer of electrons from NADH to the respiratory chain. The immediate electron acceptor for the enzyme is believed to be ubiquinone. The sequence is that of NADH-ubiquinone oxidoreductase chain 3 (ND3) from Oenothera berteroana (Bertero's evening primrose).